The sequence spans 99 residues: MQARDVILRPIITESSMAGADRKVYQFEVNRKATKTDVKVAVADVFGVTVKKVNIANVRGKNKRMGRYQGLTRNRKKATVSLTADSKDIEVFKNQEENK.

Belongs to the universal ribosomal protein uL23 family. Part of the 50S ribosomal subunit. Contacts protein L29, and trigger factor when it is bound to the ribosome.

Functionally, one of the early assembly proteins it binds 23S rRNA. One of the proteins that surrounds the polypeptide exit tunnel on the outside of the ribosome. Forms the main docking site for trigger factor binding to the ribosome. In Oenococcus oeni (strain ATCC BAA-331 / PSU-1), this protein is Large ribosomal subunit protein uL23.